We begin with the raw amino-acid sequence, 242 residues long: 1-(5-phosphoribosyl)-5-[(5-phosphoribosylamino)methylideneamino] imidazole-4-carboxamide isomerase (242 aa).

D10 serves as the catalytic Proton acceptor. D132 serves as the catalytic Proton donor.

The protein belongs to the HisA/HisF family.

It is found in the cytoplasm. It carries out the reaction 1-(5-phospho-beta-D-ribosyl)-5-[(5-phospho-beta-D-ribosylamino)methylideneamino]imidazole-4-carboxamide = 5-[(5-phospho-1-deoxy-D-ribulos-1-ylimino)methylamino]-1-(5-phospho-beta-D-ribosyl)imidazole-4-carboxamide. The protein operates within amino-acid biosynthesis; L-histidine biosynthesis; L-histidine from 5-phospho-alpha-D-ribose 1-diphosphate: step 4/9. The protein is 1-(5-phosphoribosyl)-5-[(5-phosphoribosylamino)methylideneamino] imidazole-4-carboxamide isomerase of Methanopyrus kandleri (strain AV19 / DSM 6324 / JCM 9639 / NBRC 100938).